The following is a 450-amino-acid chain: tRNA modification GTPase MnmE (450 aa).

(6S)-5-formyl-5,6,7,8-tetrahydrofolate is bound by residues arginine 23, glutamate 79, and lysine 118. The TrmE-type G domain occupies 214–374; sequence GITLILVGKP…LKEHILNKVG (161 aa). A K(+)-binding site is contributed by asparagine 224. GTP contacts are provided by residues 224 to 229, 243 to 249, and 268 to 271; these read NAGKSS, TSIAGTT, and DTAG. Serine 228 serves as a coordination point for Mg(2+). K(+) is bound by residues threonine 243, isoleucine 245, and threonine 248. Threonine 249 contacts Mg(2+). A (6S)-5-formyl-5,6,7,8-tetrahydrofolate-binding site is contributed by lysine 450.

This sequence belongs to the TRAFAC class TrmE-Era-EngA-EngB-Septin-like GTPase superfamily. TrmE GTPase family. In terms of assembly, homodimer. Heterotetramer of two MnmE and two MnmG subunits. The cofactor is K(+).

It localises to the cytoplasm. Its function is as follows. Exhibits a very high intrinsic GTPase hydrolysis rate. Involved in the addition of a carboxymethylaminomethyl (cmnm) group at the wobble position (U34) of certain tRNAs, forming tRNA-cmnm(5)s(2)U34. The sequence is that of tRNA modification GTPase MnmE from Francisella tularensis subsp. tularensis (strain WY96-3418).